We begin with the raw amino-acid sequence, 252 residues long: Imidazole glycerol phosphate synthase subunit HisF (252 aa).

Catalysis depends on residues aspartate 11 and aspartate 130.

The protein belongs to the HisA/HisF family. Heterodimer of HisH and HisF.

It is found in the cytoplasm. The catalysed reaction is 5-[(5-phospho-1-deoxy-D-ribulos-1-ylimino)methylamino]-1-(5-phospho-beta-D-ribosyl)imidazole-4-carboxamide + L-glutamine = D-erythro-1-(imidazol-4-yl)glycerol 3-phosphate + 5-amino-1-(5-phospho-beta-D-ribosyl)imidazole-4-carboxamide + L-glutamate + H(+). Its pathway is amino-acid biosynthesis; L-histidine biosynthesis; L-histidine from 5-phospho-alpha-D-ribose 1-diphosphate: step 5/9. In terms of biological role, IGPS catalyzes the conversion of PRFAR and glutamine to IGP, AICAR and glutamate. The HisF subunit catalyzes the cyclization activity that produces IGP and AICAR from PRFAR using the ammonia provided by the HisH subunit. The sequence is that of Imidazole glycerol phosphate synthase subunit HisF from Bacillus thuringiensis (strain Al Hakam).